The primary structure comprises 150 residues: MKIRGFEVVTKYKNAGINIPKRSTEHSAGYDIEAAETVSFAPGEIKLIPTGLKAYMQAGEVLYMYDRSSNPRKKGLVLINSVGVIDKDYYNNPDNEGHMFMQMRNFTDEEVVIEKGERVVQGVFMPFLVADGDENQEKEERTGGFGSTGA.

Residues 67–69 (RSS), Asn-80, and 84–86 (VID) contribute to the substrate site.

Belongs to the dUTPase family. It depends on Mg(2+) as a cofactor.

The enzyme catalyses dUTP + H2O = dUMP + diphosphate + H(+). The protein operates within pyrimidine metabolism; dUMP biosynthesis; dUMP from dCTP (dUTP route): step 2/2. This enzyme is involved in nucleotide metabolism: it produces dUMP, the immediate precursor of thymidine nucleotides and it decreases the intracellular concentration of dUTP so that uracil cannot be incorporated into DNA. In Lactococcus lactis subsp. lactis (strain IL1403) (Streptococcus lactis), this protein is Deoxyuridine 5'-triphosphate nucleotidohydrolase (dut).